The primary structure comprises 257 residues: Imidazole glycerol phosphate synthase subunit HisF (257 aa).

Active-site residues include aspartate 11 and aspartate 130.

It belongs to the HisA/HisF family. Heterodimer of HisH and HisF.

Its subcellular location is the cytoplasm. The enzyme catalyses 5-[(5-phospho-1-deoxy-D-ribulos-1-ylimino)methylamino]-1-(5-phospho-beta-D-ribosyl)imidazole-4-carboxamide + L-glutamine = D-erythro-1-(imidazol-4-yl)glycerol 3-phosphate + 5-amino-1-(5-phospho-beta-D-ribosyl)imidazole-4-carboxamide + L-glutamate + H(+). Its pathway is amino-acid biosynthesis; L-histidine biosynthesis; L-histidine from 5-phospho-alpha-D-ribose 1-diphosphate: step 5/9. IGPS catalyzes the conversion of PRFAR and glutamine to IGP, AICAR and glutamate. The HisF subunit catalyzes the cyclization activity that produces IGP and AICAR from PRFAR using the ammonia provided by the HisH subunit. This Actinobacillus succinogenes (strain ATCC 55618 / DSM 22257 / CCUG 43843 / 130Z) protein is Imidazole glycerol phosphate synthase subunit HisF.